The following is a 560-amino-acid chain: Serine palmitoyltransferase 2 (560 aa).

A helical membrane pass occupies residues 65–85 (PMLVAVLTYVGYGVLTLFGYL). Position 377 is an N6-(pyridoxal phosphate)lysine (lysine 377).

It belongs to the class-II pyridoxal-phosphate-dependent aminotransferase family. As to quaternary structure, component of the serine palmitoyltransferase (SPT) complex, which is composed of SPTLC1, SPTLC2 or SPTLC3 and SPTSSA or SPTSSB. The heterodimer consisting of SPTLC1 and SPTLC2/SPTLC3 forms the catalytic core of the enzyme, while SPTSSA or SPTSSB subunits determine substrate specificity. SPT also interacts with ORMDL proteins, especially ORMDL3, which negatively regulate SPT activity in the presence of ceramides. Forms dimers of heterodimers with SPTLC1. Pyridoxal 5'-phosphate serves as cofactor.

It is found in the endoplasmic reticulum membrane. The catalysed reaction is L-serine + hexadecanoyl-CoA + H(+) = 3-oxosphinganine + CO2 + CoA. It catalyses the reaction octadecanoyl-CoA + L-serine + H(+) = 3-oxoeicosasphinganine + CO2 + CoA. It participates in lipid metabolism; sphingolipid metabolism. Its activity is regulated as follows. SPT complex catalytic activity is negatively regulated by ORMDL proteins, including ORMDL3, in the presence of ceramides. This mechanism allows to maintain ceramide levels at sufficient concentrations for the production of complex sphingolipids, but which prevents the accumulation of ceramides to levels that trigger apoptosis. Functionally, component of the serine palmitoyltransferase multisubunit enzyme (SPT) that catalyzes the initial and rate-limiting step in sphingolipid biosynthesis by condensing L-serine and activated acyl-CoA (most commonly palmitoyl-CoA) to form long-chain bases. The SPT complex is composed of SPTLC1, SPTLC2 or SPTLC3 and SPTSSA or SPTSSB. Within this complex, the heterodimer consisting of SPTLC1 and SPTLC2/SPTLC3 forms the catalytic core. The composition of the serine palmitoyltransferase (SPT) complex determines the substrate preference. The SPTLC1-SPTLC2-SPTSSA complex shows a strong preference for C16-CoA substrate, while the SPTLC1-SPTLC3-SPTSSA isozyme uses both C14-CoA and C16-CoA as substrates, with a slight preference for C14-CoA. The SPTLC1-SPTLC2-SPTSSB complex shows a strong preference for C18-CoA substrate, while the SPTLC1-SPTLC3-SPTSSB isozyme displays an ability to use a broader range of acyl-CoAs, without apparent preference. Crucial for adipogenesis. The chain is Serine palmitoyltransferase 2 (SPTLC2) from Cricetulus griseus (Chinese hamster).